Here is a 323-residue protein sequence, read N- to C-terminus: MIRSVVRGIGSALPKRVMKNTDFEGIVETSDEWIVQRTGIRERHIAGEGETTVSLGAAAARAAIENAGLQPSDIDLVLLATSTPNNTFPASAVAIQRELGITRGFAFDLQAVCSGFIYAITTADLYIRGGMARRVLVIGAETFSHILDWTDRTTCVLFGDGAGAIVLEAAEGHGLTSDRGILAANLRSDGNHKEKLYVDGGPSTTQTVGHLRMEGREVFKHAVGMITDVIEASFEATGLTAEDIDWFVPHQANKRIIDASAKKLHIAEEKVVITVDRHGNTSAASVPLALATAVADGRIKKGDLVLLEAMGGGFTWGAVLVRW.

Active-site residues include Cys113 and His250. Residues 251–255 (QANKR) are ACP-binding. Asn280 is an active-site residue.

It belongs to the thiolase-like superfamily. FabH family. In terms of assembly, homodimer.

Its subcellular location is the cytoplasm. It catalyses the reaction malonyl-[ACP] + acetyl-CoA + H(+) = 3-oxobutanoyl-[ACP] + CO2 + CoA. Its pathway is lipid metabolism; fatty acid biosynthesis. Its function is as follows. Catalyzes the condensation reaction of fatty acid synthesis by the addition to an acyl acceptor of two carbons from malonyl-ACP. Catalyzes the first condensation reaction which initiates fatty acid synthesis and may therefore play a role in governing the total rate of fatty acid production. Possesses both acetoacetyl-ACP synthase and acetyl transacylase activities. Its substrate specificity determines the biosynthesis of branched-chain and/or straight-chain of fatty acids. This Brucella canis (strain ATCC 23365 / NCTC 10854 / RM-666) protein is Beta-ketoacyl-[acyl-carrier-protein] synthase III.